The chain runs to 334 residues: MQDFLKGLPKAELHLHIEGSLEPELMFEIGRRNGVALPFANVEEVRAAYEFNNLQEFLDIYYQGAQVLLHEQDFYDMTFAYLQRCREQNVIHAEMFFDPQTHTDRGVDIGVVIRGLTRAMEDAEIQWGQSSKLILCFLRHLSEDAAIETLRQALPYKQHFVGVGLDSSEVGHPPEKFQRVFEQAQNAGLLTVAHAGEEGPPEYIWQALDLLKVKRIDHGVRCIEDAALMQRLIDEQIPLTVCPLSNIKLCVFDSMSEHNILRLLEKGLKVTVNSDDPAYFGGYMNENFIAMQEALPMSKEQAAQLARNSFEASFLTSEEKARLLARLDQYLQNH.

Zn(2+)-binding residues include His14, His16, and His194. Glu197 (proton donor) is an active-site residue. Asp275 contributes to the Zn(2+) binding site. Asp276 is a substrate binding site.

The protein belongs to the metallo-dependent hydrolases superfamily. Adenosine and AMP deaminases family. Adenine deaminase type 2 subfamily. Zn(2+) serves as cofactor.

It catalyses the reaction adenine + H2O + H(+) = hypoxanthine + NH4(+). Catalyzes the hydrolytic deamination of adenine to hypoxanthine. Plays an important role in the purine salvage pathway and in nitrogen catabolism. In Hahella chejuensis (strain KCTC 2396), this protein is Adenine deaminase.